The following is a 378-amino-acid chain: Transmembrane 6 superfamily member 2 (378 aa).

The next 10 membrane-spanning stretches (helical) occupy residues 10-30 (TVAM…VSAF), 34-54 (LFVV…VYSL), 63-83 (PLYA…VIAL), 110-130 (IFIC…MAGA), 140-160 (LGLY…PGNI), 170-190 (PTFF…VRIF), 219-239 (LALI…GLVV), 269-289 (MLMY…ALAF), 291-311 (GCSW…QAQF), and 332-352 (TWAT…LLAF). 2 EXPERA domains span residues 61–186 (YDPL…CWAG) and 217–351 (ADLA…HLLA).

It belongs to the TM6SF family. In terms of tissue distribution, highly expressed in the liver at both the mRNA and protein levels.

It localises to the endoplasmic reticulum membrane. The protein resides in the endoplasmic reticulum-Golgi intermediate compartment membrane. In terms of biological role, regulator of liver fat metabolism influencing triglyceride secretion and hepatic lipid droplet content. May function as sterol isomerase. The protein is Transmembrane 6 superfamily member 2 (Tm6sf2) of Mus musculus (Mouse).